Reading from the N-terminus, the 407-residue chain is Phosphopentomutase (407 aa).

Mn(2+)-binding residues include Asp-10, Asp-306, His-311, Asp-347, His-348, and His-359.

It belongs to the phosphopentomutase family. Mn(2+) serves as cofactor.

It localises to the cytoplasm. It catalyses the reaction 2-deoxy-alpha-D-ribose 1-phosphate = 2-deoxy-D-ribose 5-phosphate. The enzyme catalyses alpha-D-ribose 1-phosphate = D-ribose 5-phosphate. The protein operates within carbohydrate degradation; 2-deoxy-D-ribose 1-phosphate degradation; D-glyceraldehyde 3-phosphate and acetaldehyde from 2-deoxy-alpha-D-ribose 1-phosphate: step 1/2. Its function is as follows. Isomerase that catalyzes the conversion of deoxy-ribose 1-phosphate (dRib-1-P) and ribose 1-phosphate (Rib-1-P) to deoxy-ribose 5-phosphate (dRib-5-P) and ribose 5-phosphate (Rib-5-P), respectively. This is Phosphopentomutase from Buchnera aphidicola subsp. Acyrthosiphon pisum (strain APS) (Acyrthosiphon pisum symbiotic bacterium).